The primary structure comprises 294 residues: MPPFSHVPVLADAVVAGAEHLPHHNGVLIDATLGGGGHSALLLERFPGLRLIGLDQDPTARAAAAERLAAFADRVEILATNFASYTPPAPVLMVLADLGVSSPQLDVAERGFSFRLDGPLDMRMNPGSDGETAAELIDRLEENALADLIYGYGEERLSRRIARRIKADLAAQGPYEGTAALAYAVAGCYPPKARRGRIHPATRTFQALRIAVNDELAVLDRLLQQAPDWLETGGVMGVISFHSLEDRRVKTAFLQDERLERITRKPTVATDDEQNRNPRSRSAKWRLARRVNGC.

S-adenosyl-L-methionine is bound by residues 36–38 (GGH), aspartate 55, phenylalanine 82, aspartate 97, and glutamine 104. The interval 265 to 285 (KPTVATDDEQNRNPRSRSAKW) is disordered.

It belongs to the methyltransferase superfamily. RsmH family.

Its subcellular location is the cytoplasm. It catalyses the reaction cytidine(1402) in 16S rRNA + S-adenosyl-L-methionine = N(4)-methylcytidine(1402) in 16S rRNA + S-adenosyl-L-homocysteine + H(+). Specifically methylates the N4 position of cytidine in position 1402 (C1402) of 16S rRNA. This Synechococcus sp. (strain CC9902) protein is Ribosomal RNA small subunit methyltransferase H.